A 450-amino-acid polypeptide reads, in one-letter code: ATP-dependent protease ATPase subunit HslU (450 aa).

ATP contacts are provided by residues Val-29, 71-76 (GVGKTE), Asp-261, Glu-328, and Arg-400.

The protein belongs to the ClpX chaperone family. HslU subfamily. In terms of assembly, a double ring-shaped homohexamer of HslV is capped on each side by a ring-shaped HslU homohexamer. The assembly of the HslU/HslV complex is dependent on binding of ATP.

Its subcellular location is the cytoplasm. Its function is as follows. ATPase subunit of a proteasome-like degradation complex; this subunit has chaperone activity. The binding of ATP and its subsequent hydrolysis by HslU are essential for unfolding of protein substrates subsequently hydrolyzed by HslV. HslU recognizes the N-terminal part of its protein substrates and unfolds these before they are guided to HslV for hydrolysis. This Rickettsia africae (strain ESF-5) protein is ATP-dependent protease ATPase subunit HslU.